Here is a 212-residue protein sequence, read N- to C-terminus: Cytidylate kinase (212 aa).

7 to 15 (GPAASGKGT) contributes to the ATP binding site.

Belongs to the cytidylate kinase family. Type 1 subfamily.

Its subcellular location is the cytoplasm. The enzyme catalyses CMP + ATP = CDP + ADP. The catalysed reaction is dCMP + ATP = dCDP + ADP. This chain is Cytidylate kinase, found in Nitrobacter winogradskyi (strain ATCC 25391 / DSM 10237 / CIP 104748 / NCIMB 11846 / Nb-255).